Reading from the N-terminus, the 599-residue chain is NADH-quinone oxidoreductase subunit C/D (599 aa).

Residues 1–189 form an NADH dehydrogenase I subunit C region; sequence MTDLTTHDLA…DPFVLTKQKE (189 aa). An NADH dehydrogenase I subunit D region spans residues 213–599; it reads DFMFLNLGPN…IDFVMSDVDR (387 aa).

It in the N-terminal section; belongs to the complex I 30 kDa subunit family. The protein in the C-terminal section; belongs to the complex I 49 kDa subunit family. As to quaternary structure, NDH-1 is composed of 13 different subunits. Subunits NuoB, CD, E, F, and G constitute the peripheral sector of the complex.

It is found in the cell inner membrane. It catalyses the reaction a quinone + NADH + 5 H(+)(in) = a quinol + NAD(+) + 4 H(+)(out). In terms of biological role, NDH-1 shuttles electrons from NADH, via FMN and iron-sulfur (Fe-S) centers, to quinones in the respiratory chain. The immediate electron acceptor for the enzyme in this species is believed to be ubiquinone. Couples the redox reaction to proton translocation (for every two electrons transferred, four hydrogen ions are translocated across the cytoplasmic membrane), and thus conserves the redox energy in a proton gradient. This is NADH-quinone oxidoreductase subunit C/D from Pectobacterium carotovorum subsp. carotovorum (strain PC1).